The following is a 391-amino-acid chain: BRCA1-A complex subunit Abraxas 1 (391 aa).

The region spanning 8–156 (VRISGFVLSS…THRLEFSAFI (149 aa)) is the MPN domain. A coiled-coil region spans residues 223–261 (LLAEMQKVCVEVEKSERTVEKLQEDIAQLKEAIGKQKTH). The tract at residues 354-391 (QRLKRKRKTREVSESASESGSDTEIEMNGQSGSNSPVF) is disordered. Residues 367–391 (ESASESGSDTEIEMNGQSGSNSPVF) are compositionally biased toward polar residues. Phosphoserine is present on serine 388. The pSXXF motif motif lies at 388–391 (SPVF).

Belongs to the FAM175 family. Abraxas subfamily. As to quaternary structure, component of the ARISC complex. Component of the BRCA1-A complex. Homodimer. Phosphorylation of Ser-388 of the pSXXF motif by ATM or ATR constitutes a specific recognition motif for the BRCT domain of BRCA1.

The protein localises to the nucleus. Involved in DNA damage response and double-strand break (DSB) repair. Component of the BRCA1-A complex, acting as a central scaffold protein that assembles the various components of the complex. The BRCA1-A complex specifically recognizes 'Lys-63'-linked ubiquitinated histones H2A and H2AX at DNA lesion sites. This complex also possesses deubiquitinase activity that specifically removes 'Lys-63'-linked ubiquitin on histones H2A and H2AX. The polypeptide is BRCA1-A complex subunit Abraxas 1 (Danio rerio (Zebrafish)).